A 297-amino-acid polypeptide reads, in one-letter code: MKHFIEISQLSSEQIESLLQRALYFKHTKQYPSYSQSIIANLFYENSTRTRISFELAERHLAMSVVNLDLETSSETKGEAIEDTIRTLAAMGIQYFVIRHKQDGLQQNLANKLGDTVHIINAGDGTHAHPSQAILDMVTIVEQKKQLDKLKIAILGNIKHSRVANSFQCICSKLGVGELVLISPEIWQPSQVHFGRVTDNLNEGLEGADVVICLRVQKERLLQDDHLDLDFYRNNFALTQKSLSYAKPDAMVMHPGPMNRGVEIDSEVADGNQSCILQQVTNGVYARMAILESLIAS.

Carbamoyl phosphate contacts are provided by arginine 49 and threonine 50. Lysine 77 contacts L-aspartate. Carbamoyl phosphate-binding residues include arginine 99, histidine 129, and glutamine 132. Positions 162 and 215 each coordinate L-aspartate. Residues glycine 256 and proline 257 each coordinate carbamoyl phosphate.

It belongs to the aspartate/ornithine carbamoyltransferase superfamily. ATCase family. In terms of assembly, heterododecamer (2C3:3R2) of six catalytic PyrB chains organized as two trimers (C3), and six regulatory PyrI chains organized as three dimers (R2).

The enzyme catalyses carbamoyl phosphate + L-aspartate = N-carbamoyl-L-aspartate + phosphate + H(+). It functions in the pathway pyrimidine metabolism; UMP biosynthesis via de novo pathway; (S)-dihydroorotate from bicarbonate: step 2/3. Functionally, catalyzes the condensation of carbamoyl phosphate and aspartate to form carbamoyl aspartate and inorganic phosphate, the committed step in the de novo pyrimidine nucleotide biosynthesis pathway. This chain is Aspartate carbamoyltransferase catalytic subunit, found in Legionella pneumophila (strain Lens).